Consider the following 303-residue polypeptide: Putative band 7 family protein R614 (303 aa).

It belongs to the band 7/mec-2 family.

In Acanthamoeba polyphaga (Amoeba), this protein is Putative band 7 family protein R614.